We begin with the raw amino-acid sequence, 101 residues long: Aspartyl/glutamyl-tRNA(Asn/Gln) amidotransferase subunit C (101 aa).

This sequence belongs to the GatC family. Heterotrimer of A, B and C subunits.

It carries out the reaction L-glutamyl-tRNA(Gln) + L-glutamine + ATP + H2O = L-glutaminyl-tRNA(Gln) + L-glutamate + ADP + phosphate + H(+). It catalyses the reaction L-aspartyl-tRNA(Asn) + L-glutamine + ATP + H2O = L-asparaginyl-tRNA(Asn) + L-glutamate + ADP + phosphate + 2 H(+). Its function is as follows. Allows the formation of correctly charged Asn-tRNA(Asn) or Gln-tRNA(Gln) through the transamidation of misacylated Asp-tRNA(Asn) or Glu-tRNA(Gln) in organisms which lack either or both of asparaginyl-tRNA or glutaminyl-tRNA synthetases. The reaction takes place in the presence of glutamine and ATP through an activated phospho-Asp-tRNA(Asn) or phospho-Glu-tRNA(Gln). The polypeptide is Aspartyl/glutamyl-tRNA(Asn/Gln) amidotransferase subunit C (Enterococcus faecalis (strain ATCC 700802 / V583)).